The sequence spans 342 residues: Muscleblind-like protein 3 (342 aa).

4 C3H1-type zinc fingers span residues W14–R42, N48–P74, T174–D202, and D210–P236. Over residues P316–A326 the composition is skewed to low complexity. Positions P316–Y342 are disordered. The span at P333–Y342 shows a compositional bias: polar residues.

It belongs to the muscleblind family.

The protein localises to the nucleus. It localises to the cytoplasm. In terms of biological role, mediates pre-mRNA alternative splicing regulation. Acts either as activator or repressor of splicing on specific pre-mRNA targets. Inhibits cardiac troponin-T (TNNT2) pre-mRNA exon inclusion but induces insulin receptor (IR) pre-mRNA exon inclusion in muscle. Antagonizes the alternative splicing activity pattern of CELF proteins. Could inhibit terminal muscle differentiation, acting at approximately the time of myogenin induction. The sequence is that of Muscleblind-like protein 3 (Mbnl3) from Mus musculus (Mouse).